The chain runs to 610 residues: Threonine--tRNA ligase (610 aa).

Residues Met1–Ser29 are disordered. Low complexity predominate over residues Thr8–Val24. The tract at residues Asp209–Pro502 is catalytic. Residues Cys302, His353, and His479 each coordinate Zn(2+).

Belongs to the class-II aminoacyl-tRNA synthetase family. In terms of assembly, homodimer. The cofactor is Zn(2+).

It is found in the cytoplasm. It carries out the reaction tRNA(Thr) + L-threonine + ATP = L-threonyl-tRNA(Thr) + AMP + diphosphate + H(+). Functionally, catalyzes the attachment of threonine to tRNA(Thr) in a two-step reaction: L-threonine is first activated by ATP to form Thr-AMP and then transferred to the acceptor end of tRNA(Thr). Also edits incorrectly charged L-seryl-tRNA(Thr). The chain is Threonine--tRNA ligase from Synechococcus sp. (strain WH7803).